A 220-amino-acid chain; its full sequence is tRNA (guanine-N(7)-)-methyltransferase (220 aa).

Positions 44, 69, 96, and 118 each coordinate S-adenosyl-L-methionine. Residue D118 is part of the active site. K122 is a binding site for substrate. Residues R124 to R129 form an interaction with RNA region. Residues D154 and T191–E194 contribute to the substrate site.

This sequence belongs to the class I-like SAM-binding methyltransferase superfamily. TrmB family.

The enzyme catalyses guanosine(46) in tRNA + S-adenosyl-L-methionine = N(7)-methylguanosine(46) in tRNA + S-adenosyl-L-homocysteine. It functions in the pathway tRNA modification; N(7)-methylguanine-tRNA biosynthesis. Its function is as follows. Catalyzes the formation of N(7)-methylguanine at position 46 (m7G46) in tRNA. This chain is tRNA (guanine-N(7)-)-methyltransferase, found in Geobacillus sp. (strain WCH70).